Consider the following 228-residue polypeptide: Sec-independent protein translocase protein TatB (228 aa).

Residues 1 to 21 (MFDFGLGELVFVGIIALIVLG) traverse the membrane as a helical segment. Disordered stretches follow at residues 138-162 (RSYA…AETD) and 195-228 (PVPH…VRKS). Positions 206 to 228 (AISRKRDLRPKSRAKPKLRVRKS) are enriched in basic residues.

This sequence belongs to the TatB family. In terms of assembly, the Tat system comprises two distinct complexes: a TatABC complex, containing multiple copies of TatA, TatB and TatC subunits, and a separate TatA complex, containing only TatA subunits. Substrates initially bind to the TatABC complex, which probably triggers association of the separate TatA complex to form the active translocon.

It is found in the cell inner membrane. Part of the twin-arginine translocation (Tat) system that transports large folded proteins containing a characteristic twin-arginine motif in their signal peptide across membranes. Together with TatC, TatB is part of a receptor directly interacting with Tat signal peptides. TatB may form an oligomeric binding site that transiently accommodates folded Tat precursor proteins before their translocation. The chain is Sec-independent protein translocase protein TatB from Neisseria meningitidis serogroup A / serotype 4A (strain DSM 15465 / Z2491).